We begin with the raw amino-acid sequence, 326 residues long: Centriolar satellite-associated tubulin polyglutamylase complex regulator 1 (326 aa).

A required for interaction with PCM1 region spans residues 1–111 (MLSPERLALP…HCLLQLLCPD (111 aa)). The segment at 1–225 (MLSPERLALP…SCPPPALVKE (225 aa)) is required for interaction with TPGS1, LRRC49, and TTLL1.

It belongs to the CSTPP1 family. As to quaternary structure, interacts with PCM1. Interacts with TTLL1, TPGS1, TPGS2 and LRRC49; the interactions link CSTPP1 to the complex TPGC. Binds to alpha-tubulin.

Its subcellular location is the cytoplasm. It is found in the cytoskeleton. It localises to the microtubule organizing center. The protein localises to the centrosome. The protein resides in the centriolar satellite. Regulator of the tubulin polyglutamylase complex (TPGC) that controls cytoskeletal organization, nuclear shape, and cilium disassembly by balancing microtubule and actin assembly. Regulates the assembly and stability of the TPGC and thereby modulates polyglutamylation of the microtubule, which antagonizes MAP4 binding. The polypeptide is Centriolar satellite-associated tubulin polyglutamylase complex regulator 1 (CSTPP1) (Bos taurus (Bovine)).